The following is a 218-amino-acid chain: NADH-ubiquinone oxidoreductase 21 kDa subunit, mitochondrial (218 aa).

A mitochondrion-targeting transit peptide spans 1–33 (MSALRITTASAARMLRTSNAMMPSVMGAAQRRA). The interval 31–74 (RRALSDSAEPARVPSVESARVPEKLAKEDSPLATPKRNSPDYNV) is disordered. Residues 50-60 (RVPEKLAKEDS) are compositionally biased toward basic and acidic residues.

This sequence belongs to the complex I NDUFS4 subunit family. As to quaternary structure, complex I is composed of about 40 different subunits. This is a component of the iron-sulfur (IP) fragment of the enzyme.

It localises to the mitochondrion inner membrane. In terms of biological role, accessory subunit of the mitochondrial membrane respiratory chain NADH dehydrogenase (Complex I), that is believed not to be involved in catalysis. Complex I functions in the transfer of electrons from NADH to the respiratory chain. The immediate electron acceptor for the enzyme is believed to be ubiquinone. The sequence is that of NADH-ubiquinone oxidoreductase 21 kDa subunit, mitochondrial (nuo-21) from Neurospora crassa (strain ATCC 24698 / 74-OR23-1A / CBS 708.71 / DSM 1257 / FGSC 987).